The chain runs to 245 residues: Glucan endo-1,3-beta-glucosidase (245 aa).

The first 23 residues, 1 to 23 (MMKTLVVVLSLSLTILSFGGAHA), serve as a signal peptide directing secretion. 8 disulfide bridges follow: Cys32–Cys244, Cys80–Cys90, Cys95–Cys102, Cys150–Cys233, Cys155–Cys216, Cys163–Cys179, Cys183–Cys192, and Cys193–Cys203.

The protein belongs to the thaumatin family. In terms of tissue distribution, abundantly expressed in ripening fruit.

The protein resides in the secreted. It carries out the reaction Hydrolysis of (1-&gt;3)-beta-D-glucosidic linkages in (1-&gt;3)-beta-D-glucans.. The sequence is that of Glucan endo-1,3-beta-glucosidase from Prunus avium (Cherry).